We begin with the raw amino-acid sequence, 151 residues long: 3-hydroxyacyl-[acyl-carrier-protein] dehydratase FabZ (151 aa).

H49 is an active-site residue.

It belongs to the thioester dehydratase family. FabZ subfamily.

It localises to the cytoplasm. The enzyme catalyses a (3R)-hydroxyacyl-[ACP] = a (2E)-enoyl-[ACP] + H2O. In terms of biological role, involved in unsaturated fatty acids biosynthesis. Catalyzes the dehydration of short chain beta-hydroxyacyl-ACPs and long chain saturated and unsaturated beta-hydroxyacyl-ACPs. This is 3-hydroxyacyl-[acyl-carrier-protein] dehydratase FabZ from Bordetella petrii (strain ATCC BAA-461 / DSM 12804 / CCUG 43448).